A 556-amino-acid chain; its full sequence is Formate--tetrahydrofolate ligase (556 aa).

65–72 is a binding site for ATP; it reads TPAGEGKT.

Belongs to the formate--tetrahydrofolate ligase family.

The enzyme catalyses (6S)-5,6,7,8-tetrahydrofolate + formate + ATP = (6R)-10-formyltetrahydrofolate + ADP + phosphate. The protein operates within one-carbon metabolism; tetrahydrofolate interconversion. In Acetivibrio thermocellus (strain ATCC 27405 / DSM 1237 / JCM 9322 / NBRC 103400 / NCIMB 10682 / NRRL B-4536 / VPI 7372) (Clostridium thermocellum), this protein is Formate--tetrahydrofolate ligase.